Reading from the N-terminus, the 426-residue chain is Glucose-1-phosphate adenylyltransferase (426 aa).

Residues Tyr100, Gly165, 180–181 (EK), and Ser191 each bind alpha-D-glucose 1-phosphate.

This sequence belongs to the bacterial/plant glucose-1-phosphate adenylyltransferase family. As to quaternary structure, homotetramer.

It catalyses the reaction alpha-D-glucose 1-phosphate + ATP + H(+) = ADP-alpha-D-glucose + diphosphate. It participates in glycan biosynthesis; glycogen biosynthesis. Functionally, involved in the biosynthesis of ADP-glucose, a building block required for the elongation reactions to produce glycogen. Catalyzes the reaction between ATP and alpha-D-glucose 1-phosphate (G1P) to produce pyrophosphate and ADP-Glc. This is Glucose-1-phosphate adenylyltransferase from Acetivibrio thermocellus (strain ATCC 27405 / DSM 1237 / JCM 9322 / NBRC 103400 / NCIMB 10682 / NRRL B-4536 / VPI 7372) (Clostridium thermocellum).